Reading from the N-terminus, the 468-residue chain is Putrescine aminotransferase (468 aa).

Residues 150–151 and Gln-274 contribute to the pyridoxal 5'-phosphate site; that span reads GT. An N6-(pyridoxal phosphate)lysine modification is found at Lys-300. Thr-332 is a binding site for pyridoxal 5'-phosphate.

The protein belongs to the class-III pyridoxal-phosphate-dependent aminotransferase family. Putrescine aminotransferase subfamily. The cofactor is pyridoxal 5'-phosphate.

The enzyme catalyses an alkane-alpha,omega-diamine + 2-oxoglutarate = an omega-aminoaldehyde + L-glutamate. It catalyses the reaction putrescine + 2-oxoglutarate = 1-pyrroline + L-glutamate + H2O. It carries out the reaction cadaverine + 2-oxoglutarate = 5-aminopentanal + L-glutamate. It participates in amine and polyamine degradation; putrescine degradation; 4-aminobutanal from putrescine (transaminase route): step 1/1. Functionally, catalyzes the aminotransferase reaction from putrescine to 2-oxoglutarate, leading to glutamate and 4-aminobutanal, which spontaneously cyclizes to form 1-pyrroline. This is the first step in one of two pathways for putrescine degradation, where putrescine is converted into 4-aminobutanoate (gamma-aminobutyrate or GABA) via 4-aminobutanal. Also functions as a cadaverine transaminase in a a L-lysine degradation pathway to succinate that proceeds via cadaverine, glutarate and L-2-hydroxyglutarate. In Pectobacterium atrosepticum (strain SCRI 1043 / ATCC BAA-672) (Erwinia carotovora subsp. atroseptica), this protein is Putrescine aminotransferase.